The following is a 75-amino-acid chain: UPF0352 protein YejL (75 aa).

The protein belongs to the UPF0352 family.

The polypeptide is UPF0352 protein YejL (Shigella dysenteriae serotype 1 (strain Sd197)).